The sequence spans 427 residues: Phosphatidylglycerol--prolipoprotein diacylglyceryl transferase (427 aa).

4 consecutive transmembrane segments (helical) span residues 21–41 (VPIRAYALFIIAGIVAALLIG), 53–73 (GVIYDIALWTVPFGLVGGRLY), 96–116 (IWDGGLGIWGAVALGAVGAWI), and 122–142 (GIPLPAFADALAPGIILAQAI). Residue Arg144 participates in a 1,2-diacyl-sn-glycero-3-phospho-(1'-sn-glycerol) binding. The next 2 membrane-spanning stretches (helical) occupy residues 189–209 (VALVVQPTFLYELLWNLLIFV) and 256–276 (INSFTSTFVFIGAVVYLMAAP). The interval 280–427 (EDPESLRGNQ…ARLRERLSGR (148 aa)) is disordered. A compositionally biased stretch (low complexity) spans 299–330 (EPATVAATTEAATEGVAAPADGAEAAGADATA). A compositionally biased stretch (basic and acidic residues) spans 332-346 (RPEESAEPDVEKPES). Acidic residues predominate over residues 347 to 404 (EETEAAEEASEPEAEEPEAPEAEEPEEPETEEPEADSGEEPEEESGEAPEQLVAEEPE). Positions 411–427 (ETKRRWGARLRERLSGR) are enriched in basic and acidic residues.

It belongs to the Lgt family.

The protein localises to the cell membrane. It carries out the reaction L-cysteinyl-[prolipoprotein] + a 1,2-diacyl-sn-glycero-3-phospho-(1'-sn-glycerol) = an S-1,2-diacyl-sn-glyceryl-L-cysteinyl-[prolipoprotein] + sn-glycerol 1-phosphate + H(+). It functions in the pathway protein modification; lipoprotein biosynthesis (diacylglyceryl transfer). Functionally, catalyzes the transfer of the diacylglyceryl group from phosphatidylglycerol to the sulfhydryl group of the N-terminal cysteine of a prolipoprotein, the first step in the formation of mature lipoproteins. The polypeptide is Phosphatidylglycerol--prolipoprotein diacylglyceryl transferase (Mycolicibacterium paratuberculosis (strain ATCC BAA-968 / K-10) (Mycobacterium paratuberculosis)).